The sequence spans 416 residues: LL-diaminopimelate aminotransferase (416 aa).

Substrate is bound by residues Tyr-15 and Gly-42. Pyridoxal 5'-phosphate-binding positions include Tyr-72, 108–109, Tyr-132, Asn-187, Tyr-218, and 246–248; these read SK and SFS. Positions 109, 132, and 187 each coordinate substrate. At Lys-249 the chain carries N6-(pyridoxal phosphate)lysine. Residues Arg-257 and Asn-292 each contribute to the pyridoxal 5'-phosphate site. Residues Asn-292 and Arg-388 each coordinate substrate.

This sequence belongs to the class-I pyridoxal-phosphate-dependent aminotransferase family. LL-diaminopimelate aminotransferase subfamily. In terms of assembly, homodimer. The cofactor is pyridoxal 5'-phosphate.

It carries out the reaction (2S,6S)-2,6-diaminopimelate + 2-oxoglutarate = (S)-2,3,4,5-tetrahydrodipicolinate + L-glutamate + H2O + H(+). It participates in amino-acid biosynthesis; L-lysine biosynthesis via DAP pathway; LL-2,6-diaminopimelate from (S)-tetrahydrodipicolinate (aminotransferase route): step 1/1. In terms of biological role, involved in the synthesis of meso-diaminopimelate (m-DAP or DL-DAP), required for both lysine and peptidoglycan biosynthesis. Catalyzes the direct conversion of tetrahydrodipicolinate to LL-diaminopimelate. This is LL-diaminopimelate aminotransferase from Synechococcus sp. (strain JA-2-3B'a(2-13)) (Cyanobacteria bacterium Yellowstone B-Prime).